Consider the following 60-residue polypeptide: Mannitol-specific phosphotransferase enzyme IIA component (60 aa).

The 59-residue stretch at 2–60 (SELFSNDNIFLNVNVNSQNEAIEKAGKALVDSGAVTDAYIQVVSTFMGNGLAIPHGTDD) folds into the PTS EIIA type-2 domain. The active-site Tele-phosphohistidine intermediate is His-56. His-56 carries the phosphohistidine; by HPr modification.

Homodimer or homotrimer. Seems to be a monomer when not phosphorylated.

The protein resides in the cytoplasm. The phosphoenolpyruvate-dependent sugar phosphotransferase system (sugar PTS), a major carbohydrate active transport system, catalyzes the phosphorylation of incoming sugar substrates concomitantly with their translocation across the cell membrane. The enzyme II CmtAB PTS system is involved in D-mannitol transport. In Staphylococcus aureus, this protein is Mannitol-specific phosphotransferase enzyme IIA component.